The chain runs to 438 residues: UDP-N-acetyl-D-mannosamine dehydrogenase (438 aa).

Residues Tyr21, Ile22, Asp41, Arg46, Thr93, and Thr131 each contribute to the NAD(+) site. The UDP-N-acetyl-alpha-D-mannosaminouronate site is built by Arg160, Val161, Lys212, Asn216, Arg219, His250, Arg252, and Gly263. Catalysis depends on Lys212, which acts as the Proton donor/acceptor. Cys266 serves as the catalytic Nucleophile. Positions 323 and 324 each coordinate UDP-N-acetyl-alpha-D-mannosaminouronate. Arg331 contributes to the NAD(+) binding site. Position 409 (Lys409) interacts with UDP-N-acetyl-alpha-D-mannosaminouronate.

It belongs to the UDP-glucose/GDP-mannose dehydrogenase family. As to quaternary structure, homotetramer; probably dimer of dimers.

It catalyses the reaction UDP-N-acetyl-alpha-D-mannosamine + 2 NAD(+) + H2O = UDP-N-acetyl-alpha-D-mannosaminouronate + 2 NADH + 3 H(+). Its function is as follows. Catalyzes the four-electron oxidation of UDP-N-acetyl-D-mannosamine (UDP-ManNAc), reducing NAD(+) and releasing UDP-N-acetylmannosaminuronic acid (UDP-ManNAcA). The protein is UDP-N-acetyl-D-mannosamine dehydrogenase (wecC) of Methanococcus aeolicus (strain ATCC BAA-1280 / DSM 17508 / OCM 812 / Nankai-3).